We begin with the raw amino-acid sequence, 359 residues long: Cyclin puc1 (359 aa).

The protein belongs to the cyclin family.

Functionally, function in exit from the mitotic cycle. Contributes to negative regulation of the timing of sexual development in fission yeast, and functions at the transition between cycling and non-cycling cells. Interacts with protein kinase A. The chain is Cyclin puc1 (puc1) from Schizosaccharomyces pombe (strain 972 / ATCC 24843) (Fission yeast).